We begin with the raw amino-acid sequence, 750 residues long: Photosystem I P700 chlorophyll a apoprotein A1 (750 aa).

The next 8 membrane-spanning stretches (helical) occupy residues 70–93 (VFSA…FHGA), 156–179 (LYCT…FHYH), 195–219 (LNHH…HVSL), 291–309 (IAHH…GHMY), 346–369 (WHAQ…HHMY), 385–411 (LSLF…IFMV), 433–455 (AIIS…LYIH), and 531–549 (FLVH…LILL). 2 residues coordinate [4Fe-4S] cluster: C573 and C582. 2 helical membrane-spanning segments follow: residues 589 to 610 (HVFL…HFSW) and 664 to 686 (LSAY…MFLF). Position 675 (H675) interacts with chlorophyll a'. The chlorophyll a site is built by M683 and Y691. Residue W692 coordinates phylloquinone. A helical transmembrane segment spans residues 724 to 744 (AVGVTHYLLGGIATTWAFFLA).

The protein belongs to the PsaA/PsaB family. As to quaternary structure, the PsaA/B heterodimer binds the P700 chlorophyll special pair and subsequent electron acceptors. PSI consists of a core antenna complex that captures photons, and an electron transfer chain that converts photonic excitation into a charge separation. The eukaryotic PSI reaction center is composed of at least 11 subunits. P700 is a chlorophyll a/chlorophyll a' dimer, A0 is one or more chlorophyll a, A1 is one or both phylloquinones and FX is a shared 4Fe-4S iron-sulfur center. serves as cofactor.

Its subcellular location is the plastid. The protein resides in the chloroplast thylakoid membrane. The enzyme catalyses reduced [plastocyanin] + hnu + oxidized [2Fe-2S]-[ferredoxin] = oxidized [plastocyanin] + reduced [2Fe-2S]-[ferredoxin]. In terms of biological role, psaA and PsaB bind P700, the primary electron donor of photosystem I (PSI), as well as the electron acceptors A0, A1 and FX. PSI is a plastocyanin-ferredoxin oxidoreductase, converting photonic excitation into a charge separation, which transfers an electron from the donor P700 chlorophyll pair to the spectroscopically characterized acceptors A0, A1, FX, FA and FB in turn. Oxidized P700 is reduced on the lumenal side of the thylakoid membrane by plastocyanin. The protein is Photosystem I P700 chlorophyll a apoprotein A1 of Aethionema cordifolium (Lebanon stonecress).